The following is a 379-amino-acid chain: Probable pectin lyase A (379 aa).

The N-terminal stretch at M1–A20 is a signal peptide. 2 disulfide bridges follow: C83–C102 and C92–C226. N129 carries N-linked (GlcNAc...) asparagine glycosylation. R256 is an active-site residue. A disulfide bridge links C322 with C330.

Belongs to the polysaccharide lyase 1 family.

It localises to the secreted. The enzyme catalyses Eliminative cleavage of (1-&gt;4)-alpha-D-galacturonan methyl ester to give oligosaccharides with 4-deoxy-6-O-methyl-alpha-D-galact-4-enuronosyl groups at their non-reducing ends.. Its function is as follows. Pectinolytic enzymes consist of four classes of enzymes: pectin lyase, polygalacturonase, pectin methylesterase and rhamnogalacturonase. Among pectinolytic enzymes, pectin lyase is the most important in depolymerization of pectin, since it cleaves internal glycosidic bonds of highly methylated pectins. The polypeptide is Probable pectin lyase A (pelA) (Aspergillus niger (strain ATCC MYA-4892 / CBS 513.88 / FGSC A1513)).